The chain runs to 227 residues: 2,3-bisphosphoglycerate-dependent phosphoglycerate mutase (227 aa).

Residues R7–N14, T20–G21, R59, E86–Y89, K97, R113–R114, and G182–N183 contribute to the substrate site. The active-site Tele-phosphohistidine intermediate is H8. Catalysis depends on E86, which acts as the Proton donor/acceptor.

This sequence belongs to the phosphoglycerate mutase family. BPG-dependent PGAM subfamily. As to quaternary structure, homodimer.

It catalyses the reaction (2R)-2-phosphoglycerate = (2R)-3-phosphoglycerate. It functions in the pathway carbohydrate degradation; glycolysis; pyruvate from D-glyceraldehyde 3-phosphate: step 3/5. Catalyzes the interconversion of 2-phosphoglycerate and 3-phosphoglycerate. This is 2,3-bisphosphoglycerate-dependent phosphoglycerate mutase from Neisseria meningitidis serogroup C / serotype 2a (strain ATCC 700532 / DSM 15464 / FAM18).